A 393-amino-acid chain; its full sequence is Putative competence-damage inducible protein (393 aa).

This sequence belongs to the CinA family.

The sequence is that of Putative competence-damage inducible protein from Streptococcus suis (strain 98HAH33).